Here is a 452-residue protein sequence, read N- to C-terminus: PTS system N-acetylglucosamine-specific EIICB component (452 aa).

In terms of domain architecture, PTS EIIC type-1 spans 1–361; it reads MLSFLQKLGK…LNLKTPGRED (361 aa). 9 helical membrane-spanning segments follow: residues 8-28, 42-62, 91-111, 130-150, 163-183, 223-243, 257-277, 279-299, and 329-349; these read LGKSFMLPIAVLPAVGIILAL, AGTAVFDHLPLIFAIGIAIGI, TNNMAVFGGIIAGLIAGYTYN, LVPILTAIITIILAGIFGVVW, WMLGLGGIGAGIFGLFNRLLI, MTGFFPIMMFGLPAACLAMVV, MIGFALTAFITGITEPIEFAF, FLSPLLYAVHAVLTGLSLFIV, and LLLLVGICYAAVYFIVFYVLI. The 78-residue stretch at 375–452 folds into the PTS EIIB type-1 domain; that stretch reads DVNENIMLKG…AAEELRAAVK (78 aa). Cysteine 397 serves as the catalytic Phosphocysteine intermediate; for EIIB activity.

Interacts with FloT.

It localises to the cell membrane. The protein resides in the membrane raft. It carries out the reaction N(pros)-phospho-L-histidyl-[protein] + N-acetyl-D-glucosamine(out) = N-acetyl-D-glucosamine 6-phosphate(in) + L-histidyl-[protein]. Functionally, the phosphoenolpyruvate-dependent sugar phosphotransferase system (sugar PTS), a major carbohydrate active -transport system, catalyzes the phosphorylation of incoming sugar substrates concomitantly with their translocation across the cell membrane. This system is involved in N-acetylglucosamine transport. This chain is PTS system N-acetylglucosamine-specific EIICB component (nagP), found in Bacillus subtilis (strain 168).